Reading from the N-terminus, the 309-residue chain is MRGNGVGAKFGKVAVLLGGTSAEREVSLMSGGAVLAALQAAGVDAHGFDPAQQDLHILKEQGFDRAFIALHGRGGEDGTVQGLLELLKIPYTGSGVMASALAMDKWRTKMVWAACGLPTPRYAILAGDTDWEAVVAELGLPIFVKPVHEGSSMGATKVTAASQLKAAWERAARFDDLVLAEEFIVGAELTVPFLAERALPVIRIEAPGGKYDYQNKYFTDETRYLCPSGLPAEQEQALQALVMKSARALGCRGWGRADLMLTGDGRPYLLEMNTSPGMTGHSLVPMAAKAVGLDFTALCLAILEDARLG.

Residues 109 to 304 (KMVWAACGLP…FTALCLAILE (196 aa)) enclose the ATP-grasp domain. 135–190 (VAELGLPIFVKPVHEGSSMGATKVTAASQLKAAWERAARFDDLVLAEEFIVGAELT) provides a ligand contact to ATP. Positions 258, 271, and 273 each coordinate Mg(2+).

This sequence belongs to the D-alanine--D-alanine ligase family. Mg(2+) serves as cofactor. Mn(2+) is required as a cofactor.

It is found in the cytoplasm. The catalysed reaction is 2 D-alanine + ATP = D-alanyl-D-alanine + ADP + phosphate + H(+). The protein operates within cell wall biogenesis; peptidoglycan biosynthesis. Cell wall formation. The polypeptide is D-alanine--D-alanine ligase (Aromatoleum aromaticum (strain DSM 19018 / LMG 30748 / EbN1) (Azoarcus sp. (strain EbN1))).